A 315-amino-acid chain; its full sequence is 4-hydroxy-3-methylbut-2-enyl diphosphate reductase (315 aa).

Position 12 (Cys-12) interacts with [4Fe-4S] cluster. Residues His-41 and His-74 each coordinate (2E)-4-hydroxy-3-methylbut-2-enyl diphosphate. 2 residues coordinate dimethylallyl diphosphate: His-41 and His-74. Isopentenyl diphosphate contacts are provided by His-41 and His-74. Cys-96 is a [4Fe-4S] cluster binding site. His-124 contributes to the (2E)-4-hydroxy-3-methylbut-2-enyl diphosphate binding site. His-124 is a dimethylallyl diphosphate binding site. Residue His-124 participates in isopentenyl diphosphate binding. Catalysis depends on Glu-126, which acts as the Proton donor. Residue Thr-168 participates in (2E)-4-hydroxy-3-methylbut-2-enyl diphosphate binding. Cys-198 is a [4Fe-4S] cluster binding site. The (2E)-4-hydroxy-3-methylbut-2-enyl diphosphate site is built by Ser-226, Ser-227, Asn-228, and Ser-270. Positions 226, 227, 228, and 270 each coordinate dimethylallyl diphosphate. Residues Ser-226, Ser-227, Asn-228, and Ser-270 each contribute to the isopentenyl diphosphate site.

This sequence belongs to the IspH family. [4Fe-4S] cluster serves as cofactor.

The enzyme catalyses isopentenyl diphosphate + 2 oxidized [2Fe-2S]-[ferredoxin] + H2O = (2E)-4-hydroxy-3-methylbut-2-enyl diphosphate + 2 reduced [2Fe-2S]-[ferredoxin] + 2 H(+). It carries out the reaction dimethylallyl diphosphate + 2 oxidized [2Fe-2S]-[ferredoxin] + H2O = (2E)-4-hydroxy-3-methylbut-2-enyl diphosphate + 2 reduced [2Fe-2S]-[ferredoxin] + 2 H(+). The protein operates within isoprenoid biosynthesis; dimethylallyl diphosphate biosynthesis; dimethylallyl diphosphate from (2E)-4-hydroxy-3-methylbutenyl diphosphate: step 1/1. It participates in isoprenoid biosynthesis; isopentenyl diphosphate biosynthesis via DXP pathway; isopentenyl diphosphate from 1-deoxy-D-xylulose 5-phosphate: step 6/6. Catalyzes the conversion of 1-hydroxy-2-methyl-2-(E)-butenyl 4-diphosphate (HMBPP) into a mixture of isopentenyl diphosphate (IPP) and dimethylallyl diphosphate (DMAPP). Acts in the terminal step of the DOXP/MEP pathway for isoprenoid precursor biosynthesis. The protein is 4-hydroxy-3-methylbut-2-enyl diphosphate reductase of Pseudomonas savastanoi pv. phaseolicola (strain 1448A / Race 6) (Pseudomonas syringae pv. phaseolicola (strain 1448A / Race 6)).